Here is a 788-residue protein sequence, read N- to C-terminus: LPS-assembly protein LptD (788 aa).

Residues 1 to 24 form the signal peptide; it reads MKKRFPTLLATLIWTALYSQHTLA.

This sequence belongs to the LptD family. As to quaternary structure, component of the lipopolysaccharide transport and assembly complex. Interacts with LptE and LptA.

The protein resides in the cell outer membrane. In terms of biological role, together with LptE, is involved in the assembly of lipopolysaccharide (LPS) at the surface of the outer membrane. This chain is LPS-assembly protein LptD, found in Yersinia enterocolitica serotype O:8 / biotype 1B (strain NCTC 13174 / 8081).